A 119-amino-acid polypeptide reads, in one-letter code: Large ribosomal subunit protein uL18 (119 aa).

The protein belongs to the universal ribosomal protein uL18 family. As to quaternary structure, part of the 50S ribosomal subunit; part of the 5S rRNA/L5/L18/L25 subcomplex. Contacts the 5S and 23S rRNAs.

This is one of the proteins that bind and probably mediate the attachment of the 5S RNA into the large ribosomal subunit, where it forms part of the central protuberance. In Borrelia recurrentis (strain A1), this protein is Large ribosomal subunit protein uL18.